The following is a 424-amino-acid chain: Lactate racemase (424 aa).

Ni(II)-pyridinium-3,5-bisthiocarboxylate mononucleotide is bound at residue 72–75 (DHTR). Catalysis depends on proton donor/acceptor residues histidine 108 and histidine 174. The Ni(II)-pyridinium-3,5-bisthiocarboxylate mononucleotide site is built by lysine 184 and histidine 200. Residues glutamine 295 and lysine 298 each contribute to the substrate site.

This sequence belongs to the lactate racemase family. As to quaternary structure, homodimer. Requires Ni(II)-pyridinium-3,5-bisthiocarboxylate mononucleotide as cofactor.

It catalyses the reaction (S)-lactate = (R)-lactate. Its activity is regulated as follows. Activation of the apo-enzyme requires the three accessory proteins LarB, LarE and LarC, that are involved in the biosynthesis of the nickel-pincer cofactor of LarA. Inhibited by sulfite that behaves as a mixed inhibitor. Its function is as follows. Catalyzes the interconversion between the D- and L-isomers of lactate. May act as a rescue enzyme to ensure D-lactate production in physiological conditions where its production by the D-lactate dehydrogenase LdhD is not sufficient. D-Lactate is absolutely required for growth of L.plantarum and is an essential component of the cell wall peptidoglycan in this species, where it is incorporated as the last residue of the muramoyl-pentadepsipeptide peptidoglycan precursor; its incorporation confers high level of vancomycin resistance. In Lactiplantibacillus plantarum (strain ATCC BAA-793 / NCIMB 8826 / WCFS1) (Lactobacillus plantarum), this protein is Lactate racemase.